The following is a 244-amino-acid chain: 14-3-3 protein homolog 1 (244 aa).

It belongs to the 14-3-3 family.

This is 14-3-3 protein homolog 1 from Echinococcus granulosus (Hydatid tapeworm).